The primary structure comprises 78 residues: MQNSKTDMCAALWAVTGLVLNVAVRFALEPFKESMGQGWHTAARVAVNGAIVLALADRLSDSPVTMTLFVMALSASPE.

The N-terminal stretch at 1 to 27 (MQNSKTDMCAALWAVTGLVLNVAVRFA) is a signal peptide.

This is an uncharacterized protein from Dryophytes versicolor (chameleon treefrog).